The following is a 194-amino-acid chain: 2,4-dinitrotoluene dioxygenase system, small oxygenase component (194 aa).

The protein belongs to the bacterial ring-hydroxylating dioxygenase beta subunit family. The 2,4-dinitrotoluene dioxygenase (DNTDO) multicomponent enzyme system is composed of an electron transfer component and a dioxygenase component (iron sulfur protein (ISP)). The electron transfer component is composed of a ferredoxin reductase (DntAa) and a ferredoxin (DntAb), and the dioxygenase component is formed of a large alpha subunit (DntAc) and a small beta subunit (DntAd).

In terms of biological role, component of the 2,4-dinitrotoluene dioxygenase (DNTDO) multicomponent enzyme system which catalyzes the incorporation of both atoms of molecular oxygen into 2,4-dinitrotoluene (DNT) to form 4-methyl-5-nitrocatechol (MNC) and nitrite. The beta subunit seems to have a structural role in the holoenzyme. Also able to convert naphthalene to cis-(1R,2S)-dihydroxy-1,2-dihydronaphthalene. The polypeptide is 2,4-dinitrotoluene dioxygenase system, small oxygenase component (Burkholderia sp. (strain RASC)).